The chain runs to 152 residues: Ribonuclease H (152 aa).

The RNase H type-1 domain occupies Lys6–Ala147. Mg(2+) is bound by residues Asp15, Glu53, Asp75, and Asp139.

Belongs to the RNase H family. Monomer. Mg(2+) serves as cofactor.

It is found in the cytoplasm. The enzyme catalyses Endonucleolytic cleavage to 5'-phosphomonoester.. Its function is as follows. Endonuclease that specifically degrades the RNA of RNA-DNA hybrids. The protein is Ribonuclease H of Francisella philomiragia subsp. philomiragia (strain ATCC 25017 / CCUG 19701 / FSC 153 / O#319-036).